The primary structure comprises 357 residues: Scopoletin 8-hydroxylase (357 aa).

The Fe2OG dioxygenase domain maps to 206-307 (MGTKMVNMNY…RVSVPIFTAP (102 aa)). 2-oxoglutarate is bound at residue Y216. H231, D233, and H288 together coordinate Fe cation. The 2-oxoglutarate site is built by R298 and S300.

It belongs to the iron/ascorbate-dependent oxidoreductase family. Requires L-ascorbate as cofactor. It depends on Fe(2+) as a cofactor. In terms of tissue distribution, expressed in both primary and lateral roots under iron-deficient conditions, except in apical root zones, and mostly in the root epidermal layer.

The enzyme catalyses scopoletin + 2-oxoglutarate + O2 = fraxetin + succinate + CO2. The protein operates within phenylpropanoid metabolism. In terms of biological role, involved in the pathway of sideretin biosynthesis from feruloyl CoA, a redox-active catecholic metabolite exuded by roots in response to iron deficiency in order to facilitate the uptake of iron; this pathway consists in the successive conversion from feruloyl CoA to scopoletin, from scopoletin to fraxetin and from fraxetin to sideretin. Catalyzes the biosynthesis of fraxetin via scopoletin hydroxylation. The sequence is that of Scopoletin 8-hydroxylase from Arabidopsis thaliana (Mouse-ear cress).